The chain runs to 292 residues: Probable 2-(5''-triphosphoribosyl)-3'-dephosphocoenzyme-A synthase (292 aa).

Belongs to the CitG/MdcB family.

It catalyses the reaction 3'-dephospho-CoA + ATP = 2'-(5''-triphospho-alpha-D-ribosyl)-3'-dephospho-CoA + adenine. The polypeptide is Probable 2-(5''-triphosphoribosyl)-3'-dephosphocoenzyme-A synthase (Shigella boydii serotype 18 (strain CDC 3083-94 / BS512)).